Here is a 219-residue protein sequence, read N- to C-terminus: NADH-quinone oxidoreductase subunit C (219 aa).

This sequence belongs to the complex I 30 kDa subunit family. In terms of assembly, NDH-1 is composed of 14 different subunits. Subunits NuoB, C, D, E, F, and G constitute the peripheral sector of the complex.

The protein resides in the cell inner membrane. It carries out the reaction a quinone + NADH + 5 H(+)(in) = a quinol + NAD(+) + 4 H(+)(out). NDH-1 shuttles electrons from NADH, via FMN and iron-sulfur (Fe-S) centers, to quinones in the respiratory chain. The immediate electron acceptor for the enzyme in this species is believed to be ubiquinone. Couples the redox reaction to proton translocation (for every two electrons transferred, four hydrogen ions are translocated across the cytoplasmic membrane), and thus conserves the redox energy in a proton gradient. The protein is NADH-quinone oxidoreductase subunit C of Methylorubrum populi (strain ATCC BAA-705 / NCIMB 13946 / BJ001) (Methylobacterium populi).